A 183-amino-acid polypeptide reads, in one-letter code: uncharacterized protein (183 aa).

It belongs to the Bcl-2 family.

This is an uncharacterized protein from Equine herpesvirus 2 (strain 86/87) (EHV-2).